The sequence spans 287 residues: Ribosomal RNA small subunit methyltransferase A (287 aa).

S-adenosyl-L-methionine is bound by residues Asn35, Val37, Gly62, Glu83, Asp113, and Asn131.

The protein belongs to the class I-like SAM-binding methyltransferase superfamily. rRNA adenine N(6)-methyltransferase family. RsmA subfamily.

The protein resides in the cytoplasm. The catalysed reaction is adenosine(1518)/adenosine(1519) in 16S rRNA + 4 S-adenosyl-L-methionine = N(6)-dimethyladenosine(1518)/N(6)-dimethyladenosine(1519) in 16S rRNA + 4 S-adenosyl-L-homocysteine + 4 H(+). Specifically dimethylates two adjacent adenosines (A1518 and A1519) in the loop of a conserved hairpin near the 3'-end of 16S rRNA in the 30S particle. May play a critical role in biogenesis of 30S subunits. The chain is Ribosomal RNA small subunit methyltransferase A from Thermobifida fusca (strain YX).